Reading from the N-terminus, the 542-residue chain is Chaperonin GroEL (542 aa).

ATP contacts are provided by residues 29–32 (TLGP), 86–90 (DGTTT), Gly-413, 476–478 (NAA), and Asp-492. The tract at residues 522 to 542 (PDENGPAAVPDMGMGGMGGMM) is disordered.

The protein belongs to the chaperonin (HSP60) family. In terms of assembly, forms a cylinder of 14 subunits composed of two heptameric rings stacked back-to-back. Interacts with the co-chaperonin GroES.

The protein resides in the cytoplasm. It catalyses the reaction ATP + H2O + a folded polypeptide = ADP + phosphate + an unfolded polypeptide.. Functionally, together with its co-chaperonin GroES, plays an essential role in assisting protein folding. The GroEL-GroES system forms a nano-cage that allows encapsulation of the non-native substrate proteins and provides a physical environment optimized to promote and accelerate protein folding. This Listeria monocytogenes serotype 4a (strain HCC23) protein is Chaperonin GroEL.